Here is an 815-residue protein sequence, read N- to C-terminus: Dual specificity tyrosine-phosphorylation-regulated kinase mbk-2 (815 aa).

Disordered stretches follow at residues 1 to 49, 67 to 146, 185 to 204, and 298 to 395; these read MAAL…NYTR, PSSF…PLGT, YEFP…SQQH, and ALPS…FRPE. Composition is skewed to polar residues over residues 7–25 and 40–49; these read FTRN…TQQG and SKMSNINYTR. Low complexity predominate over residues 68–78; the sequence is SSFSGASSSSS. Composition is skewed to polar residues over residues 119-140 and 190-204; these read SGNT…TSNL and GQAQ…SQQH. Residues 301-316 are compositionally biased toward low complexity; that stretch reads SVGTSSSNGSSNSSSG. Residues 325 to 351 are compositionally biased toward polar residues; the sequence is LMTQSIGGPNKHLSASHSTLNTASTHD. Serine 361 is subject to Phosphoserine; by cdk-1. A compositionally biased stretch (low complexity) spans 363-391; the sequence is SNESLSRSHTSSSGGSQGGHNSNSGSNSG. The region spanning 460-773 is the Protein kinase domain; sequence YEVLKVIGKG…PAQALKHKWL (314 aa). Residues 466–474 and lysine 489 each bind ATP; that span reads IGKGSFGQV. The Proton acceptor role is filled by aspartate 586. A Phosphotyrosine; by autocatalysis modification is found at tyrosine 620.

This sequence belongs to the protein kinase superfamily. CMGC Ser/Thr protein kinase family. MNB/DYRK subfamily. As to quaternary structure, part of a complex, consisting of pseudophosphatases egg-3, egg-4, egg-5 and kinase mbk-2. Interacts (via Tyr-618 and Tyr-620) with egg-4 (via tyrosine-protein phosphatase domain) and egg-5 (via tyrosine-protein phosphatase domain); mbk-2 tyrosine phosphorylation enhances the interaction. The interaction inhibits mbk-2 kinase activity and is required for mbk-2 oocyte cortex localization. Interacts (via N-terminus) with egg-3 (via tyrosine-protein phosphatase domain); the interaction does not affect mbk-2 kinase activity, is enhanced by mbk-2 tyrosine phosphorylation status and requires prior binding of mbk-2 to egg-4 and egg-5. Mg(2+) is required as a cofactor. Post-translationally, autophosphorylated.

It localises to the cytoplasm. The protein localises to the cell cortex. The catalysed reaction is L-seryl-[protein] + ATP = O-phospho-L-seryl-[protein] + ADP + H(+). It catalyses the reaction L-threonyl-[protein] + ATP = O-phospho-L-threonyl-[protein] + ADP + H(+). It carries out the reaction L-tyrosyl-[protein] + ATP = O-phospho-L-tyrosyl-[protein] + ADP + H(+). With respect to regulation, activated during oocyte maturation by phosphorylation on Ser-361 by cdk-1. The pseudotyrosine phosphatases egg-4 and egg-5 sequester activated mbk-2 until the meiotic divisions and inhibit mbk-2 kinase activity directly, using a mixed-inhibition mechanism that does not involve tyrosine dephosphorylation. Required for oocyte-to-zygote transition in which it phosphorylates oocyte proteins, including mei-1, oma-1, oma-2, mex-5, and mex-6, modifying their activity and/or stability following meiosis. Through phosphorylation of P granule components including meg-1, promotes the disassembly of zygotic P granules in the anterior cytoplasm during zygote polarization, and thus plays a role in P granule distribution and segregation in early stage embryos following meiosis. Functions in both spindle positioning and in the posterior localization of cytoplasmic determinants, including pie-1, pos-1, and pgl-1, in early embryos. Involved in the asymmetric distribution of plk-1 at the 2-cell embryonic stage. The sequence is that of Dual specificity tyrosine-phosphorylation-regulated kinase mbk-2 from Caenorhabditis briggsae.